The primary structure comprises 783 residues: Protein transport protein SEC23 B (783 aa).

Residues Cys-59, Cys-62, Cys-81, and Cys-84 each coordinate Zn(2+). The tract at residues Cys-59 to Cys-84 is zinc finger-like.

This sequence belongs to the SEC23/SEC24 family. SEC23 subfamily. Component of the coat protein complex II (COPII), composed of at least five proteins: the Sec23/24 complex, the Sec13/31 complex and Sar1. Interacts with SEC24A.

The protein localises to the cytoplasmic vesicle. The protein resides in the COPII-coated vesicle membrane. It is found in the endoplasmic reticulum membrane. Its subcellular location is the membrane. In terms of biological role, component of the coat protein complex II (COPII) which promotes the formation of transport vesicles from the endoplasmic reticulum (ER). The coat has two main functions, the physical deformation of the endoplasmic reticulum membrane into vesicles and the selection of cargo molecules. The protein is Protein transport protein SEC23 B of Arabidopsis thaliana (Mouse-ear cress).